We begin with the raw amino-acid sequence, 307 residues long: MATH domain and coiled-coil domain-containing protein At3g58380 (307 aa).

An MATH domain is found at 6 to 132 (DKKFVWVIKD…CREITIVIEV (127 aa)). Residues 238 to 290 (KVDWLEKKLKEVKEKKKNVDNGKARLQQIEEDLQKLNQKRLDLKDILDKEKAN) are a coiled coil.

This is MATH domain and coiled-coil domain-containing protein At3g58380 from Arabidopsis thaliana (Mouse-ear cress).